We begin with the raw amino-acid sequence, 122 residues long: Copper metallothionein 1 (122 aa).

A cys-rich copper-binding 1 region spans residues Met1 to Cys35. The spacer B1 stretch occupies residues Pro36 to Thr50. Positions Cys51–Cys72 are cys-rich copper-binding 2. The spacer B2 stretch occupies residues Pro73 to Thr81. Positions Cys82–Cys103 are cys-rich copper-binding 3. Positions Pro104–Ser113 are spacer B3. Residues Cys114–Ala122 are cys-rich copper-binding 4.

It belongs to the metallothionein superfamily.

The protein resides in the cytoplasm. It is found in the cell cortex. Its function is as follows. Copper metallothionein that protects the cell against copper toxicity by tightly chelating copper ions. Required for antioxidant-mediated growth rescue in the presence of fluconazole. Acts as a critical factors for lung colonization and virulence. This Cryptococcus neoformans var. grubii serotype A (strain H99 / ATCC 208821 / CBS 10515 / FGSC 9487) (Filobasidiella neoformans var. grubii) protein is Copper metallothionein 1.